Consider the following 172-residue polypeptide: Large ribosomal subunit protein uL11m (172 aa).

The protein belongs to the universal ribosomal protein uL11 family.

Its subcellular location is the mitochondrion. The polypeptide is Large ribosomal subunit protein uL11m (mrpl11) (Dictyostelium discoideum (Social amoeba)).